Reading from the N-terminus, the 424-residue chain is Hemagglutinin-esterase (424 aa).

A signal peptide spans 1-16 (MFLLPRFILVSCIIGS). The tract at residues 7–127 (FILVSCIIGS…SNDIWMQNKG (121 aa)) is esterase domain 1. Residues 17 to 392 (LGFYNPPTNV…PICVYDPLPV (376 aa)) lie on the Virion surface side of the membrane. Serine 40 functions as the Nucleophile in the catalytic mechanism. Cysteine 44 and cysteine 65 are oxidised to a cystine. Asparagine 54, asparagine 89, asparagine 114, asparagine 153, asparagine 236, and asparagine 301 each carry an N-linked (GlcNAc...) asparagine; by host glycan. 3 cysteine pairs are disulfide-bonded: cysteine 113–cysteine 162, cysteine 197–cysteine 276, and cysteine 205–cysteine 249. The interval 128-266 (LFYTQVYKNM…GNYLAISNEL (139 aa)) is receptor binding. Positions 267-379 (LLTVPTKAIC…RCPTAADINN (113 aa)) are esterase domain 2. Cysteine 307 and cysteine 312 are oxidised to a cystine. An N-linked (GlcNAc...) asparagine; by host glycan is attached at asparagine 316. Residues aspartate 326 and histidine 329 each act as charge relay system in the active site. A disulfide bridge connects residues cysteine 347 and cysteine 371. The N-linked (GlcNAc...) asparagine; by host glycan is linked to asparagine 358. A helical transmembrane segment spans residues 393–413 (ILLGILLGVAVIIIVVLLLYF). The Intravirion segment spans residues 414 to 424 (MVDNGTRLHDA). The N-linked (GlcNAc...) asparagine; by host glycan is linked to asparagine 417.

Belongs to the influenza type C/coronaviruses hemagglutinin-esterase family. In terms of assembly, homodimer; disulfide-linked. Forms a complex with the M protein in the pre-Golgi. Associates then with S-M complex to form a ternary complex S-M-HE. Post-translationally, N-glycosylated in the host RER.

Its subcellular location is the virion membrane. The protein resides in the host cell membrane. The catalysed reaction is N-acetyl-9-O-acetylneuraminate + H2O = N-acetylneuraminate + acetate + H(+). The enzyme catalyses N-acetyl-4-O-acetylneuraminate + H2O = N-acetylneuraminate + acetate + H(+). Functionally, structural protein that makes short spikes at the surface of the virus. Contains receptor binding and receptor-destroying activities. Mediates de-O-acetylation of N-acetyl-4-O-acetylneuraminic acid, which is probably the receptor determinant recognized by the virus on the surface of erythrocytes and susceptible cells. This receptor-destroying activity is important for virus release as it probably helps preventing self-aggregation and ensures the efficient spread of the progeny virus from cell to cell. May serve as a secondary viral attachment protein for initiating infection, the spike protein being the major one. May become a target for both the humoral and the cellular branches of the immune system. This is Hemagglutinin-esterase from Homo sapiens (Human).